The chain runs to 377 residues: Glycine oxidase (377 aa).

Residues 14-15 (VI), 34-35 (EK), 42-43 (AS), 47-49 (AGM), and Val180 each bind FAD. 2 residues coordinate substrate: Arg309 and Arg336. 334-340 (HYRNGIL) lines the FAD pocket.

The protein belongs to the DAO family. ThiO subfamily. As to quaternary structure, homotetramer. It depends on FAD as a cofactor.

It carries out the reaction glycine + O2 + H2O = glyoxylate + H2O2 + NH4(+). The enzyme catalyses N-ethylglycine + O2 + H2O = ethylamine + glyoxylate + H2O2. The catalysed reaction is sarcosine + O2 + H2O = methylamine + glyoxylate + H2O2. It catalyses the reaction D-alanine + O2 + H2O = pyruvate + H2O2 + NH4(+). Its pathway is cofactor biosynthesis; thiamine diphosphate biosynthesis. With respect to regulation, is inhibited at high substrate concentration. Its function is as follows. Catalyzes the FAD-dependent oxidative deamination of various amines and D-amino acids to yield the corresponding alpha-keto acids, ammonia/amine, and hydrogen peroxide. Oxidizes glycine, sarcosine (N-methylglycine), N-ethylglycine, D-proline, D-alanine, glycine-ethyl ester, and some other D-amino acids. Does not act on L-proline. Is essential for thiamine biosynthesis since the oxidation of glycine catalyzed by ThiO generates the glycine imine intermediate (dehydroglycine) required for the biosynthesis of the thiazole ring of thiamine pyrophosphate. The polypeptide is Glycine oxidase (Geobacillus kaustophilus (strain HTA426)).